We begin with the raw amino-acid sequence, 1205 residues long: Partitioning defective 3 homolog B (1205 aa).

2 disordered regions span residues 83 to 104 (EPLH…PDAF) and 137 to 165 (VRRS…SLKL). A Phosphoserine modification is found at Ser100. The PDZ 1 domain maps to 201–289 (TRTVEISGEG…SPSVLLHVLP (89 aa)). The tract at residues 318–374 (VPPPVHGKSGLKTANLTGTDSPETDASASLQQNKSPRVPRLGGKPSSPSLSPLMGFG) is disordered. A compositionally biased stretch (polar residues) spans 329-352 (KTANLTGTDSPETDASASLQQNKS). Residues Ser346, Ser352, and Ser368 each carry the phosphoserine modification. Positions 356-374 (PRLGGKPSSPSLSPLMGFG) are enriched in low complexity. 2 PDZ domains span residues 383–468 (KIDL…VIAR) and 498–585 (EIPL…GMIQ). A phosphoserine mark is found at Ser635, Ser710, Ser728, Ser730, Ser746, Ser749, and Ser801. The disordered stretch occupies residues 707–743 (ASKSMDLVPDESKVHSLAGQKSESPSKDFGPTLGLKK). 2 disordered regions span residues 784-921 (AIDK…KHQE) and 1111-1205 (PYYP…TAAV). Polar residues predominate over residues 806-822 (HSGQGALNCESAPQGNS). Composition is skewed to basic and acidic residues over residues 838 to 865 (KEKE…DPER) and 881 to 921 (KKED…KHQE). The residue at position 1184 (Ser1184) is a Phosphoserine.

Belongs to the PAR3 family. In terms of assembly, interacts with PARD6B. Interacts with INSC/inscuteable. Highly expressed in kidney, lung and skeletal muscle. Expressed at intermediate levels in brain, heart, placenta, liver and pancreas. Isoform 1 is predominant, while isoform 2 and isoform 3 are expressed at lower levels.

The protein resides in the endomembrane system. It is found in the cell junction. The protein localises to the tight junction. Functionally, putative adapter protein involved in asymmetrical cell division and cell polarization processes. May play a role in the formation of epithelial tight junctions. This chain is Partitioning defective 3 homolog B (PARD3B), found in Homo sapiens (Human).